Here is a 567-residue protein sequence, read N- to C-terminus: Signal transducer and activator of transcription b (567 aa).

Residues Trp449–Arg548 enclose the SH2 domain.

This sequence belongs to the transcription factor STAT family. As to quaternary structure, may interact with sodium-dependent transporter snf-12; the interaction is probably direct.

The protein resides in the cytoplasm. The protein localises to the nucleus. It localises to the vesicle. Its function is as follows. Carries out a dual function: signal transduction and activation of transcription. Required, in concert with transcription factor elt-3, for up-regulation of the vacuolar H(+)-ATPase and acceleration of lysosome maturation at molt. As part of the innate immune response to molting and injury of the adult epidermis, positively regulates the expression of epidermal antimicrobial peptides, such as nlp-29. Through positively modulating the expression of epidermal antimicrobial peptides, such as nlp-29, plays a role in resistance to fungal infection and in the response to physical wounding and phorbol ester PMA treatment. Functions cell autonomously in the epidermis, in concert with sodium-dependent transporter snf-12, probably acting at vesicular membranes, downstream of a p38 MAPK/pmk-1 pathway. This Caenorhabditis elegans protein is Signal transducer and activator of transcription b.